The sequence spans 245 residues: 1-(5-phosphoribosyl)-5-[(5-phosphoribosylamino)methylideneamino] imidazole-4-carboxamide isomerase (245 aa).

The active-site Proton acceptor is Asp-10. The active-site Proton donor is the Asp-135.

This sequence belongs to the HisA/HisF family.

It is found in the cytoplasm. The enzyme catalyses 1-(5-phospho-beta-D-ribosyl)-5-[(5-phospho-beta-D-ribosylamino)methylideneamino]imidazole-4-carboxamide = 5-[(5-phospho-1-deoxy-D-ribulos-1-ylimino)methylamino]-1-(5-phospho-beta-D-ribosyl)imidazole-4-carboxamide. It functions in the pathway amino-acid biosynthesis; L-histidine biosynthesis; L-histidine from 5-phospho-alpha-D-ribose 1-diphosphate: step 4/9. The polypeptide is 1-(5-phosphoribosyl)-5-[(5-phosphoribosylamino)methylideneamino] imidazole-4-carboxamide isomerase (Methanosarcina acetivorans (strain ATCC 35395 / DSM 2834 / JCM 12185 / C2A)).